Consider the following 37-residue polypeptide: Large ribosomal subunit protein bL36c (37 aa).

Belongs to the bacterial ribosomal protein bL36 family.

It is found in the plastid. Its subcellular location is the chloroplast. The protein is Large ribosomal subunit protein bL36c of Lotus japonicus (Lotus corniculatus var. japonicus).